The chain runs to 2033 residues: Major viral transcription factor ICP4 homolog (2033 aa).

A compositionally biased stretch (low complexity) spans 1 to 16 (MFWHQPRQQQLRQLQR). Disordered stretches follow at residues 1 to 47 (MFWH…PPSP), 95 to 145 (FSDP…LPAP), 157 to 199 (LSSS…GSSY), 218 to 240 (PPRS…ADRC), 277 to 301 (DQSP…CVGE), 313 to 338 (EERK…ESLP), 350 to 461 (AEIN…GAVA), 505 to 527 (SFAQ…ARQR), 719 to 747 (LPPD…ASRT), 1015 to 1064 (GKQS…GALN), 1085 to 1186 (LLSD…PGDP), 1294 to 1342 (ETWR…EGGT), 1420 to 1451 (ASPH…RDAA), 1531 to 1612 (VVFP…PPAA), 1636 to 1655 (RFDE…GGKP), 1664 to 1718 (LCEQ…SPSP), and 1746 to 2033 (EISP…GTER). Residues 157–173 (LSSSSPSGSSRGSVTSP) are compositionally biased toward low complexity. The span at 223 to 240 (PDCRRGEPVSEDGMADRC) shows a compositional bias: basic and acidic residues. Basic and acidic residues predominate over residues 313–326 (EERKEAARRSPDAE). Residues 359 to 368 (ESDEAEDEDA) are compositionally biased toward acidic residues. Low complexity predominate over residues 507–518 (AQRQQPRQQQHA). The segment covering 732 to 741 (KSRGGRGGGS) has biased composition (gly residues). The span at 1031-1056 (RATASSPRTPASRPPHGSAAAPPSGR) shows a compositional bias: low complexity. The segment covering 1086 to 1097 (LSDEAGTDDDGD) has biased composition (acidic residues). Over residues 1169 to 1181 (SSSSFASSSLASA) the composition is skewed to low complexity. The segment covering 1294–1303 (ETWRDAEDHP) has biased composition (basic and acidic residues). Residues 1575-1591 (SHDRSPSSSSRRRDGRP) are compositionally biased toward basic and acidic residues. Residues 1592-1602 (SSRRRPSRRMS) show a composition bias toward basic residues. 2 stretches are compositionally biased toward basic and acidic residues: residues 1752–1765 (RRRD…GCRQ) and 1774–1795 (EGGR…DSVP). A compositionally biased stretch (low complexity) spans 1812–1843 (SAGRSSSSSSSSSSSSSSSPSSRPSRSATPSL). The segment covering 1853 to 1869 (APVDRSRSGRRRERDRP) has biased composition (basic and acidic residues). Positions 1912–1921 (TPSSATTLPS) are enriched in polar residues. Over residues 1927-1936 (DSVDETETED) the composition is skewed to acidic residues. The span at 1937–1948 (SAPPARLAPSPL) shows a compositional bias: low complexity.

It belongs to the herpesviridae ICP4 family. Post-translationally, a long stretch of serine residues may be a major site of phosphorylation.

It localises to the host nucleus. Functionally, this IE protein is a multifunctional protein capable of migrating to the nucleus, binding to DNA, trans-activating other viral genes, and autoregulating its own synthesis. It is required for the switch from immediate-early to early mode of gene expression. The sequence is that of Major viral transcription factor ICP4 homolog (ICP4B) from Amazona oratrix (yellow-headed parrot).